We begin with the raw amino-acid sequence, 483 residues long: Phloretin 2'-O-glucosyltransferase (483 aa).

The Proton acceptor role is filled by His15. His15 is a binding site for an anthocyanidin. Asp118 (charge relay) is an active-site residue. The UDP-alpha-D-glucose site is built by Thr140, Ala360, Gln362, His377, Trp380, Asn381, Ser382, and Glu385. Ala400 serves as a coordination point for an anthocyanidin. Residues Glu401 and Gln402 each contribute to the UDP-alpha-D-glucose site.

This sequence belongs to the UDP-glycosyltransferase family.

The enzyme catalyses phloretin + UDP-alpha-D-glucose = phlorizin + UDP + H(+). In terms of biological role, glycosyltransferase that possesses phloretin 2'-O-glycosyltransferase activity. Converts phloretin to phlorizin (phloretin 2'-O-glucoside), a potent antioxidant. Is specific for phloretin and does not possess glycosyltransferase activity toward caffeic acid, catechin, chlorogenic acid, 2-coumaric acid, 3-coumaric acid, 4-coumaric acid, cyanidin, 3,4-dihydroxyhydrocinnamic acid, epicatechin, 3-hydroxybenzoic acid, naringenin, 3,4-dihydroxybenzoic acid, quercetin and rutin. Can glycosylate phloretin in the presence of UDP-glucose, UDP-xylose and UDP-galactose. This chain is Phloretin 2'-O-glucosyltransferase, found in Malus domestica (Apple).